A 163-amino-acid polypeptide reads, in one-letter code: Neurotrophin-3 (163 aa).

The N-terminal stretch at 1-3 (IQS) is a signal peptide. A propeptide spanning residues 4–119 (TSMDQGILTE…ALNRTSRRKR (116 aa)) is cleaved from the precursor. Disordered regions lie at residues 38–60 (ARTKDGTQTTVKKSEAEADATAS) and 90–131 (LLSE…YSVC). Asn112 carries N-linked (GlcNAc...) asparagine glycosylation.

This sequence belongs to the NGF-beta family.

It localises to the secreted. In terms of biological role, seems to promote the survival of visceral and proprioceptive sensory neurons. This chain is Neurotrophin-3 (NTF3), found in Eunectes notaeus (Yellow anaconda).